Reading from the N-terminus, the 65-residue chain is Large ribosomal subunit protein bL35 (65 aa).

This sequence belongs to the bacterial ribosomal protein bL35 family.

In Aeromonas hydrophila subsp. hydrophila (strain ATCC 7966 / DSM 30187 / BCRC 13018 / CCUG 14551 / JCM 1027 / KCTC 2358 / NCIMB 9240 / NCTC 8049), this protein is Large ribosomal subunit protein bL35.